The sequence spans 130 residues: Small ribosomal subunit protein uS11 (130 aa).

The protein belongs to the universal ribosomal protein uS11 family. As to quaternary structure, part of the 30S ribosomal subunit. Interacts with proteins S7 and S18. Binds to IF-3.

Located on the platform of the 30S subunit, it bridges several disparate RNA helices of the 16S rRNA. Forms part of the Shine-Dalgarno cleft in the 70S ribosome. In Prochlorococcus marinus (strain MIT 9211), this protein is Small ribosomal subunit protein uS11.